Here is a 154-residue protein sequence, read N- to C-terminus: MSKRQRGKGISIFKLLSRIWIPLVILVVLVVGGFVVYRVHSYFASEKRESYADSNLGSSKPFNPKQIVYEVFGPPGTVADISYFDANSDPQRIDGAQLPWSLLMTTTLAAVMGNLVAQGNTDSIGCRIIVDGVVKAERVSNEVNAYTYCLVKSA.

2 consecutive transmembrane segments (helical) span residues 19 to 39 and 97 to 117; these read IWIP…VYRV and QLPW…NLVA.

It belongs to the MmpS family.

It is found in the cell membrane. This Mycobacterium leprae (strain TN) protein is Probable transport accessory protein MmpS4.